A 195-amino-acid polypeptide reads, in one-letter code: Probable GTP-binding protein EngB (195 aa).

Residues 22 to 194 (LKGEVAFVGR…LDLISTLLKE (173 aa)) enclose the EngB-type G domain. Residues 30–37 (GRSNVGKS), 56–60 (GKTRS), 74–77 (DLPG), 141–144 (TKMD), and 173–175 (TSS) each bind GTP. Mg(2+) is bound by residues Ser-37 and Thr-58.

Belongs to the TRAFAC class TrmE-Era-EngA-EngB-Septin-like GTPase superfamily. EngB GTPase family. Mg(2+) is required as a cofactor.

Its function is as follows. Necessary for normal cell division and for the maintenance of normal septation. The sequence is that of Probable GTP-binding protein EngB from Thermotoga petrophila (strain ATCC BAA-488 / DSM 13995 / JCM 10881 / RKU-1).